We begin with the raw amino-acid sequence, 171 residues long: Prolyl-tRNA synthetase associated domain-containing protein 1 (171 aa).

The protein belongs to the PRORSD1 family.

This Bos taurus (Bovine) protein is Prolyl-tRNA synthetase associated domain-containing protein 1 (PRORSD1).